We begin with the raw amino-acid sequence, 155 residues long: Small ribosomal subunit protein uS7c (155 aa).

The protein belongs to the universal ribosomal protein uS7 family. In terms of assembly, part of the 30S ribosomal subunit.

The protein resides in the plastid. The protein localises to the chloroplast. In terms of biological role, one of the primary rRNA binding proteins, it binds directly to 16S rRNA where it nucleates assembly of the head domain of the 30S subunit. In Cabomba caroliniana (Carolina fanwort), this protein is Small ribosomal subunit protein uS7c (rps7).